Reading from the N-terminus, the 516-residue chain is Delta(24)-sterol reductase (516 aa).

The N-terminal stretch at M1–G22 is a signal peptide. The Lumenal portion of the chain corresponds to L23 to R31. A helical membrane pass occupies residues W32–V52. The Cytoplasmic segment spans residues R53–H516. Residues F58–A234 form the FAD-binding PCMH-type domain. An FAD-binding site is contributed by T163–S175.

It belongs to the FAD-binding oxidoreductase/transferase type 4 family. As to quaternary structure, interacts with DHCR7; this interaction regulates DHCR7 activity. FAD serves as cofactor.

It localises to the endoplasmic reticulum membrane. The protein localises to the golgi apparatus membrane. It catalyses the reaction cholesterol + NADP(+) = desmosterol + NADPH + H(+). It carries out the reaction lanosterol + NADPH + H(+) = 24,25-dihydrolanosterol + NADP(+). The catalysed reaction is 5alpha-cholest-8-en-3beta-ol + NADP(+) = zymosterol + NADPH + H(+). Its pathway is steroid biosynthesis; cholesterol biosynthesis. Catalyzes the reduction of the delta-24 double bond of sterol intermediates during cholesterol biosynthesis. In addition to its cholesterol-synthesizing activity, can protect cells from oxidative stress by reducing caspase 3 activity during apoptosis induced by oxidative stress. Also protects against amyloid-beta peptide-induced apoptosis. This is Delta(24)-sterol reductase (Dhcr24) from Rattus norvegicus (Rat).